A 298-amino-acid polypeptide reads, in one-letter code: Nucleotide-binding protein Csal_2229 (298 aa).

8 to 15 serves as a coordination point for ATP; sequence GRSGSGKS. GTP is bound at residue 59-62; it reads DARN.

It belongs to the RapZ-like family.

Its function is as follows. Displays ATPase and GTPase activities. In Chromohalobacter salexigens (strain ATCC BAA-138 / DSM 3043 / CIP 106854 / NCIMB 13768 / 1H11), this protein is Nucleotide-binding protein Csal_2229.